Here is a 114-residue protein sequence, read N- to C-terminus: Flagellar hook-basal body complex protein FliE (114 aa).

This sequence belongs to the FliE family.

The protein localises to the bacterial flagellum basal body. This is Flagellar hook-basal body complex protein FliE from Burkholderia multivorans (strain ATCC 17616 / 249).